Reading from the N-terminus, the 312-residue chain is Protein Rep40 (312 aa).

Residues 84–239 (DPQYAASVFL…LDHDFGKVTK (156 aa)) form the SF3 helicase domain. 110-117 (GPATTGKT) provides a ligand contact to ATP. Positions 264-301 (KGGAKKRPAPSDADISEPKRVRESVAQPSTSDAEASIN) are disordered.

Homooligomer.

It localises to the host nucleus. The enzyme catalyses ATP + H2O = ADP + phosphate + H(+). Functionally, plays a critical role during packaging of viral DNA into empty capsids, where they are thought to be part of the packaging motor complex. The single stranded genomic DNA is packaged in a 3' to 5' direction and requires the association of viral DNA with Rep40. The sequence is that of Protein Rep40 (Rep40) from Mammalia (AAV-2).